The chain runs to 258 residues: Apolipoprotein A-I (258 aa).

Positions 1-18 are cleaved as a signal peptide; the sequence is MKFLVLALTILLAAGTQA. Positions 32–63 are 3 X approximate tandem repeats; sequence VKAALNMYIAQVKLTAQRSIDLLDDTEYKEYK. Repeat copies occupy residues 64-85 and 86-106. The interval 64–258 is 10 X approximate tandem repeats; that stretch reads MQLSQSLDNL…WLSTRPSARP (195 aa). A 3; half-length repeat occupies 107–117; that stretch reads KDVEDVRTQLE. 7 tandem repeats follow at residues 118–139, 140–161, 162–183, 184–205, 206–227, 228–238, and 239–258. A disordered region spans residues 233 to 258; sequence FKARWAPPPRRPSKSSWLSTRPSARP. Residues 246 to 258 show a composition bias toward polar residues; the sequence is KSSWLSTRPSARP.

Belongs to the apolipoprotein A1/A4/E family. Major protein of plasma HDL, also found in chylomicrons. Expressed in liver, intestine and muscle.

The protein localises to the secreted. Functionally, participates in the reverse transport of cholesterol from tissues to the liver for excretion by promoting cholesterol efflux from tissues and by acting as a cofactor for the lecithin cholesterol acyltransferase (LCAT). The protein is Apolipoprotein A-I (apoa1) of Salmo salar (Atlantic salmon).